The following is a 413-amino-acid chain: Zinc finger protein 821 (413 aa).

The interval 26–83 (RQAMMKTDFPGDLGSQRQAIQQLRDQDSSSSDSEGDEEETTQDEVSSHTSEEDGGVVK) is disordered. The segment covering 58-67 (SEGDEEETTQ) has biased composition (acidic residues). 2 consecutive C2H2-type zinc fingers follow at residues 117 to 141 (QLCQCPLCQLDCGSREQLIAHVYQH) and 151 to 173 (YMCPVCGRALSSPGSLGRHLLIH). Positions 260–367 (ALRRQNEPLE…EKMDMMLRAQ (108 aa)) form a coiled coil. Residues 279 to 320 (RTAKKSRRDNETPEEREVRRMRDREAKRLQRMQETDEQRARR) form a disordered region.

It belongs to the krueppel C2H2-type zinc-finger protein family.

Its subcellular location is the nucleus. Functionally, may be involved in transcriptional regulation. The sequence is that of Zinc finger protein 821 (Znf821) from Mus musculus (Mouse).